The primary structure comprises 352 residues: MASEDVKRTESAAVSTIVNLAEEAREGVKAPSYAFKSICKSLFAGGVAGGVSRTAVAPLERMKILLQVQNPHNIKYSGTVQGLKHIWRTEGLRGLFKGNGTNCARIVPNSAVKFFSYEQASNGILYMYRQRTGNENAQLTPLLRLGAGATAGIIAMSATYPMDMVRGRLTVQTANSPYQYRGIAHALATVLREEGPRALYRGWLPSVIGVVPYVGLNFSVYESLKDWLVKENPYGLVENNELTVVTRLTCGAIAGTVGQTIAYPLDVIRRRMQMVGWKDASAIVTGEGRSTASLEYTGMVDAFRKTVRHEGFGALYKGLVPNSVKVVPSIAIAFVTYEMVKDVLGVEFRISD.

Solcar repeat units follow at residues 36–123, 139–227, and 242–343; these read KSIC…ASNG, LTPL…LKDW, and LTVV…VKDV. 6 consecutive transmembrane segments (helical) span residues 41-61, 100-120, 145-162, 202-221, 242-263, and 324-340; these read SLFA…PLER, GTNC…YEQA, LGAG…TYPM, GWLP…FSVY, LTVV…TIAY, and VKVV…YEMV.

This sequence belongs to the mitochondrial carrier (TC 2.A.29) family. In terms of tissue distribution, expressed in seedling radicles and roots, vasculature of cotyledons, leaf primordia, leaves and sepals.

It localises to the mitochondrion inner membrane. With respect to regulation, inhibited by pyridoxal 5-phosphate, bathophenanthroline, mersalyl, p-hydroxymercuribenzoate and tannic acid. Its function is as follows. Mitochondrial adenylate carrier that catalyzes specifically the transport of ATP, ADP and AMP by a counter-exchange mechanism across the inner mitochondrial membrane. Substrate preference in reconstituted proteoliposomes is ATP &gt; AMP &gt; ADP. May play a role in oxidative phosphorylation and be important for the provision of energy required to support growth in heterotrophic tissues. The protein is Mitochondrial adenine nucleotide transporter ADNT1 (ADNT1) of Arabidopsis thaliana (Mouse-ear cress).